The primary structure comprises 356 residues: Dihydroorotate dehydrogenase (quinone) (356 aa).

FMN-binding positions include 60–64 and Ser-84; that span reads AGFDK. Residue Lys-64 coordinates substrate. 109-113 contacts substrate; that stretch reads NRFGF. The FMN site is built by Asn-140 and Asn-171. Asn-171 lines the substrate pocket. Ser-174 serves as the catalytic Nucleophile. Residue Asn-176 coordinates substrate. The FMN site is built by Lys-216 and Gly-244. 245 to 246 lines the substrate pocket; the sequence is NT. Residues Gly-267, Gly-296, and 317-318 contribute to the FMN site; that span reads YS.

Belongs to the dihydroorotate dehydrogenase family. Type 2 subfamily. In terms of assembly, monomer. The cofactor is FMN.

The protein localises to the cell membrane. The enzyme catalyses (S)-dihydroorotate + a quinone = orotate + a quinol. Its pathway is pyrimidine metabolism; UMP biosynthesis via de novo pathway; orotate from (S)-dihydroorotate (quinone route): step 1/1. In terms of biological role, catalyzes the conversion of dihydroorotate to orotate with quinone as electron acceptor. The protein is Dihydroorotate dehydrogenase (quinone) of Azorhizobium caulinodans (strain ATCC 43989 / DSM 5975 / JCM 20966 / LMG 6465 / NBRC 14845 / NCIMB 13405 / ORS 571).